Consider the following 482-residue polypeptide: Glutamate-rich WD repeat-containing protein 1 (482 aa).

Disordered stretches follow at residues 1–75 (MSSK…WRAG) and 148–180 (QLHK…EDKD). 2 stretches are compositionally biased toward acidic residues: residues 27–63 (NGED…DNDG) and 157–180 (EDSD…EDKD). WD repeat units follow at residues 191 to 231 (NHNG…KALD), 294 to 334 (GHTE…PAIT), 337 to 377 (AHTA…DNSP), 383 to 423 (YHTG…DTEE), and 446 to 482 (QGQH…NSEE).

Its subcellular location is the nucleus. The protein resides in the nucleolus. In Dictyostelium discoideum (Social amoeba), this protein is Glutamate-rich WD repeat-containing protein 1 (grwd1).